The chain runs to 157 residues: Protein TIFY 8 (157 aa).

Residues Val-33–Leu-68 form the Tify domain. A disordered region spans residues Ser-126–Ser-147. A compositionally biased stretch (basic residues) spans Ser-137–Ser-147.

This sequence belongs to the TIFY/JAZ family. Ubiquitinated. Targeted for degradation by the SCF(COI1) E3 ubiquitin ligase-proteasome pathway during jasmonate signaling.

Its function is as follows. Repressor of jasmonate responses. In Oryza sativa subsp. japonica (Rice), this protein is Protein TIFY 8.